The sequence spans 278 residues: 4-diphosphocytidyl-2-C-methyl-D-erythritol kinase (278 aa).

Residue lysine 9 is part of the active site. 93–103 (PLGGGLGGGSS) lines the ATP pocket. Aspartate 135 is a catalytic residue.

Belongs to the GHMP kinase family. IspE subfamily.

The catalysed reaction is 4-CDP-2-C-methyl-D-erythritol + ATP = 4-CDP-2-C-methyl-D-erythritol 2-phosphate + ADP + H(+). The protein operates within isoprenoid biosynthesis; isopentenyl diphosphate biosynthesis via DXP pathway; isopentenyl diphosphate from 1-deoxy-D-xylulose 5-phosphate: step 3/6. Functionally, catalyzes the phosphorylation of the position 2 hydroxy group of 4-diphosphocytidyl-2C-methyl-D-erythritol. The polypeptide is 4-diphosphocytidyl-2-C-methyl-D-erythritol kinase (Nitrosomonas eutropha (strain DSM 101675 / C91 / Nm57)).